Consider the following 372-residue polypeptide: Glutamate 5-kinase (372 aa).

Residue K14 coordinates ATP. Residues S54, D141, and N153 each coordinate substrate. 173–174 (TD) lines the ATP pocket. The region spanning 280 to 358 (RGRVIIDAGA…SEIESVLGHL (79 aa)) is the PUA domain.

Belongs to the glutamate 5-kinase family.

It localises to the cytoplasm. It catalyses the reaction L-glutamate + ATP = L-glutamyl 5-phosphate + ADP. The protein operates within amino-acid biosynthesis; L-proline biosynthesis; L-glutamate 5-semialdehyde from L-glutamate: step 1/2. Its function is as follows. Catalyzes the transfer of a phosphate group to glutamate to form L-glutamate 5-phosphate. In Cupriavidus metallidurans (strain ATCC 43123 / DSM 2839 / NBRC 102507 / CH34) (Ralstonia metallidurans), this protein is Glutamate 5-kinase.